The primary structure comprises 240 residues: 5-oxoprolinase subunit B (240 aa).

An ATP-binding site is contributed by 194-201; sequence GWQLIGKT.

This sequence belongs to the PxpB family. As to quaternary structure, forms a complex composed of PxpA, PxpB and PxpC. Interacts with PxpC (KipA). Interaction with PxpC prevents the inhibitory action of PxpB (KipI). Interacts with KinA. Two PxpB monomers bind via their C-domains at a conserved proline in the KinA dimerization and histidine-phosphotransfer (DHp) domain.

It catalyses the reaction 5-oxo-L-proline + ATP + 2 H2O = L-glutamate + ADP + phosphate + H(+). In terms of biological role, catalyzes the cleavage of 5-oxoproline to form L-glutamate coupled to the hydrolysis of ATP to ADP and inorganic phosphate. In addition, is a potent inhibitor of the autophosphorylation reaction of kinase A (kinA) and its reverse reaction, but does not inhibit phosphate transfer to the Spo0F response regulator once kinase A is phosphorylated. Is an inhibitor of the catalytic domain of kinase A affecting the ATP/ADP reactions and not the phosphotransferase functions of this domain. The inhibition is non-competitive with respect to ATP. The sequence is that of 5-oxoprolinase subunit B from Bacillus subtilis (strain 168).